The chain runs to 62 residues: Small ribosomal subunit protein eS17 (62 aa).

This sequence belongs to the eukaryotic ribosomal protein eS17 family.

The polypeptide is Small ribosomal subunit protein eS17 (Methanoculleus marisnigri (strain ATCC 35101 / DSM 1498 / JR1)).